The following is a 143-amino-acid chain: Large ribosomal subunit protein uL11 (143 aa).

It belongs to the universal ribosomal protein uL11 family. As to quaternary structure, part of the ribosomal stalk of the 50S ribosomal subunit. Interacts with L10 and the large rRNA to form the base of the stalk. L10 forms an elongated spine to which L12 dimers bind in a sequential fashion forming a multimeric L10(L12)X complex. One or more lysine residues are methylated.

Forms part of the ribosomal stalk which helps the ribosome interact with GTP-bound translation factors. This is Large ribosomal subunit protein uL11 from Laribacter hongkongensis (strain HLHK9).